The chain runs to 262 residues: Hydroxyacylglutathione hydrolase (262 aa).

Zn(2+) contacts are provided by histidine 53, histidine 55, aspartate 57, histidine 58, histidine 111, aspartate 128, and histidine 166.

This sequence belongs to the metallo-beta-lactamase superfamily. Glyoxalase II family. As to quaternary structure, monomer. Requires Zn(2+) as cofactor.

It catalyses the reaction an S-(2-hydroxyacyl)glutathione + H2O = a 2-hydroxy carboxylate + glutathione + H(+). Its pathway is secondary metabolite metabolism; methylglyoxal degradation; (R)-lactate from methylglyoxal: step 2/2. Thiolesterase that catalyzes the hydrolysis of S-D-lactoyl-glutathione to form glutathione and D-lactic acid. This Nitrosomonas europaea (strain ATCC 19718 / CIP 103999 / KCTC 2705 / NBRC 14298) protein is Hydroxyacylglutathione hydrolase.